The primary structure comprises 308 residues: Uridine diphosphate glucose pyrophosphatase NUDT22 (308 aa).

The substrate site is built by Phe-56, Tyr-86, Arg-138, Ala-143, Asp-150, His-155, and Glu-157. The 168-residue stretch at 117 to 284 folds into the Nudix hydrolase domain; the sequence is ADPLGVGAAL…KGAILLYNRH (168 aa). Residues 174–195 carry the Nudix box motif; that stretch reads GLLVVRELFSSVLQEICDEVNL. Mg(2+) contacts are provided by Glu-188 and Glu-192. Ser-273 serves as a coordination point for substrate.

The protein belongs to the Nudix hydrolase family. The cofactor is Mg(2+).

It catalyses the reaction UDP-sugar + H2O = UMP + alpha-D-aldose 1-phosphate.. Functionally, hydrolyzes UDP-glucose to glucose 1-phosphate and UMP and UDP-galactose to galactose 1-phosphate and UMP. Preferred substrate is UDP-glucose. This is Uridine diphosphate glucose pyrophosphatase NUDT22 (Nudt22) from Mus musculus (Mouse).